The following is a 243-amino-acid chain: 6-carboxyhexanoate--CoA ligase (243 aa).

This sequence belongs to the BioW family. Homodimer. Requires Mg(2+) as cofactor.

It catalyses the reaction heptanedioate + ATP + CoA = 6-carboxyhexanoyl-CoA + AMP + diphosphate. It participates in metabolic intermediate metabolism; pimeloyl-CoA biosynthesis; pimeloyl-CoA from pimelate: step 1/1. Its function is as follows. Catalyzes the transformation of pimelate into pimeloyl-CoA with concomitant hydrolysis of ATP to AMP. The polypeptide is 6-carboxyhexanoate--CoA ligase (Corynebacterium pseudotuberculosis (strain FRC41)).